Here is a 270-residue protein sequence, read N- to C-terminus: Protein ABHD14A (270 aa).

A helical; Signal-anchor for type II membrane protein membrane pass occupies residues 9-29 (LVVLGLVLLATVLLYLLLPSM). N-linked (GlcNAc...) asparagine glycosylation occurs at N61. Residues S170 and D221 each act as charge relay system in the active site. An N-linked (GlcNAc...) asparagine glycan is attached at N237. The active-site Charge relay system is the H248.

This sequence belongs to the AB hydrolase superfamily. ABHD14 family.

The protein resides in the cytoplasm. It is found in the membrane. In terms of biological role, possible role in granule neuron development. The chain is Protein ABHD14A from Danio rerio (Zebrafish).